Reading from the N-terminus, the 396-residue chain is S-adenosylmethionine synthase (396 aa).

H16 lines the ATP pocket. D18 lines the Mg(2+) pocket. E44 contacts K(+). L-methionine-binding residues include E57 and Q100. Residues 100–110 (QSPDIAQGVDR) are flexible loop. Residues 167-169 (DAK), 232-233 (RF), D241, 247-248 (RK), A264, and K268 contribute to the ATP site. D241 lines the L-methionine pocket. Residue K272 participates in L-methionine binding.

It belongs to the AdoMet synthase family. In terms of assembly, homotetramer; dimer of dimers. Requires Mg(2+) as cofactor. K(+) serves as cofactor.

Its subcellular location is the cytoplasm. The enzyme catalyses L-methionine + ATP + H2O = S-adenosyl-L-methionine + phosphate + diphosphate. The protein operates within amino-acid biosynthesis; S-adenosyl-L-methionine biosynthesis; S-adenosyl-L-methionine from L-methionine: step 1/1. In terms of biological role, catalyzes the formation of S-adenosylmethionine (AdoMet) from methionine and ATP. The overall synthetic reaction is composed of two sequential steps, AdoMet formation and the subsequent tripolyphosphate hydrolysis which occurs prior to release of AdoMet from the enzyme. In Ralstonia nicotianae (strain ATCC BAA-1114 / GMI1000) (Ralstonia solanacearum), this protein is S-adenosylmethionine synthase.